Reading from the N-terminus, the 287-residue chain is Succinate--CoA ligase [ADP-forming] subunit alpha 2 (287 aa).

CoA contacts are provided by residues 17 to 20 (TGYQ), Lys-43, and 96 to 98 (ITE). Tyr-159 lines the substrate pocket. Residue His-246 is the Tele-phosphohistidine intermediate of the active site.

The protein belongs to the succinate/malate CoA ligase alpha subunit family. In terms of assembly, heterotetramer of two alpha and two beta subunits.

The enzyme catalyses succinate + ATP + CoA = succinyl-CoA + ADP + phosphate. It carries out the reaction GTP + succinate + CoA = succinyl-CoA + GDP + phosphate. It functions in the pathway carbohydrate metabolism; tricarboxylic acid cycle; succinate from succinyl-CoA (ligase route): step 1/1. Succinyl-CoA synthetase functions in the citric acid cycle (TCA), coupling the hydrolysis of succinyl-CoA to the synthesis of either ATP or GTP and thus represents the only step of substrate-level phosphorylation in the TCA. The alpha subunit of the enzyme binds the substrates coenzyme A and phosphate, while succinate binding and nucleotide specificity is provided by the beta subunit. The chain is Succinate--CoA ligase [ADP-forming] subunit alpha 2 from Archaeoglobus fulgidus (strain ATCC 49558 / DSM 4304 / JCM 9628 / NBRC 100126 / VC-16).